The chain runs to 185 residues: Guanylate kinase (185 aa).

The 178-residue stretch at glycine 4–glutamate 181 folds into the Guanylate kinase-like domain. Residue glycine 11 to serine 18 coordinates ATP.

Belongs to the guanylate kinase family.

It is found in the cytoplasm. The catalysed reaction is GMP + ATP = GDP + ADP. In terms of biological role, essential for recycling GMP and indirectly, cGMP. In Fusobacterium nucleatum subsp. nucleatum (strain ATCC 25586 / DSM 15643 / BCRC 10681 / CIP 101130 / JCM 8532 / KCTC 2640 / LMG 13131 / VPI 4355), this protein is Guanylate kinase.